Here is a 200-residue protein sequence, read N- to C-terminus: Large ribosomal subunit protein uL4 (200 aa).

Residues 42–65 (TRAQKTRSEVSGGGAKPWRQKGTG) form a disordered region.

Belongs to the universal ribosomal protein uL4 family. As to quaternary structure, part of the 50S ribosomal subunit.

Functionally, one of the primary rRNA binding proteins, this protein initially binds near the 5'-end of the 23S rRNA. It is important during the early stages of 50S assembly. It makes multiple contacts with different domains of the 23S rRNA in the assembled 50S subunit and ribosome. Its function is as follows. Forms part of the polypeptide exit tunnel. The sequence is that of Large ribosomal subunit protein uL4 from Aliivibrio fischeri (strain MJ11) (Vibrio fischeri).